The sequence spans 229 residues: MNILIFGPNGSGKGTQGELIQKAFGITHIESGVIFREHISKGTELGKQAKSYIDKGELVPDDITIPMILETLQIKGKSGWLLDGFPRNITQAQKLHEAMLKKGVKLDYVIEITLPREVAKSRIIGRRICKTNNNHPNNVSIDSIKPDGNNCRVCHGELIVRTDDQDEEAINKRHDIYYNTKTGTLSAAHYFKNLSDQYETHYILVNGQNTIEEIRKTLLEDLGISSEVS.

ATP is bound at residue 10 to 15; sequence GSGKGT. The NMP stretch occupies residues 30-59; the sequence is ESGVIFREHISKGTELGKQAKSYIDKGELV. Residues Ser31, Arg36, 57 to 59, 84 to 87, and Gln91 contribute to the AMP site; these read ELV and GFPR. The tract at residues 125-164 is LID; that stretch reads GRRICKTNNNHPNNVSIDSIKPDGNNCRVCHGELIVRTDD. Arg126 contributes to the ATP binding site. Residues Arg161 and Arg173 each contribute to the AMP site. Asn209 contacts ATP.

Belongs to the adenylate kinase family. Monomer.

The protein localises to the cytoplasm. It carries out the reaction AMP + ATP = 2 ADP. Its pathway is purine metabolism; AMP biosynthesis via salvage pathway; AMP from ADP: step 1/1. Functionally, catalyzes the reversible transfer of the terminal phosphate group between ATP and AMP. Plays an important role in cellular energy homeostasis and in adenine nucleotide metabolism. The polypeptide is Adenylate kinase (Lawsonia intracellularis (strain PHE/MN1-00)).